A 764-amino-acid polypeptide reads, in one-letter code: 1,4-alpha-glucan branching enzyme GlgB (764 aa).

D434 serves as the catalytic Nucleophile. E487 (proton donor) is an active-site residue.

This sequence belongs to the glycosyl hydrolase 13 family. GlgB subfamily. As to quaternary structure, monomer.

The enzyme catalyses Transfers a segment of a (1-&gt;4)-alpha-D-glucan chain to a primary hydroxy group in a similar glucan chain.. The protein operates within glycan biosynthesis; glycogen biosynthesis. Catalyzes the formation of the alpha-1,6-glucosidic linkages in glycogen by scission of a 1,4-alpha-linked oligosaccharide from growing alpha-1,4-glucan chains and the subsequent attachment of the oligosaccharide to the alpha-1,6 position. The chain is 1,4-alpha-glucan branching enzyme GlgB from Nostoc sp. (strain PCC 7120 / SAG 25.82 / UTEX 2576).